The sequence spans 371 residues: tRNA-specific 2-thiouridylase MnmA (371 aa).

ATP-binding positions include 24–31 (AMSGGVDS) and leucine 50. The active-site Nucleophile is cysteine 120. Cysteine 120 and cysteine 216 are joined by a disulfide. Glycine 144 is a binding site for ATP. Residues 166–168 (KDQ) form an interaction with tRNA region. Catalysis depends on cysteine 216, which acts as the Cysteine persulfide intermediate.

This sequence belongs to the MnmA/TRMU family.

Its subcellular location is the cytoplasm. The enzyme catalyses S-sulfanyl-L-cysteinyl-[protein] + uridine(34) in tRNA + AH2 + ATP = 2-thiouridine(34) in tRNA + L-cysteinyl-[protein] + A + AMP + diphosphate + H(+). Functionally, catalyzes the 2-thiolation of uridine at the wobble position (U34) of tRNA, leading to the formation of s(2)U34. The protein is tRNA-specific 2-thiouridylase MnmA of Wolbachia sp. subsp. Brugia malayi (strain TRS).